The primary structure comprises 518 residues: D-aminopeptidase (518 aa).

The Nucleophile role is filled by S62. K65 serves as the catalytic Proton donor/acceptor. The important for specificity stretch occupies residues 477–487 (QRSMDAPSPGE). Residue D481 coordinates substrate.

It belongs to the peptidase S12 family. In terms of assembly, homodimer.

The catalysed reaction is Release of an N-terminal D-amino acid from a peptide, Xaa-|-Yaa-, in which Xaa is preferably D-Ala, D-Ser or D-Thr. D-amino acid amides and methyl esters also are hydrolyzed, as is glycine amide.. Inhibited by beta-lactam compounds such as 6-aminopenicillic acid, 7-aminocephalosporanic acid, benzylpenicillin and ampicillin. Inhibited by p-chloromercuribenzoate. Its function is as follows. Hydrolyzes N-terminal residues in D-amino acid-containing peptides. The protein is D-aminopeptidase of Brucella abortus (strain S19).